The sequence spans 676 residues: Pre-mRNA-splicing factor CLF1 (676 aa).

HAT repeat units lie at residues 46 to 78 (EYQGRKRQEYEGALRRNRLNTGQWMRYAQWELE), 80 to 112 (REFARARSVFERALEVNSTHVPTWIRYIQCELK), 114 to 146 (KNINHARNLLDRAVTLLPRVDKLWFTYVATEET), 148 to 179 (GNIAGCRAVFERWMHWRPPVTAWAAYVNMEKR), 181 to 212 (REFDRARGILRRYVTVHPGAPAWNKWAKFEME), 215 to 255 (NRDT…FETR), 257 to 291 (REYERARALYTYGLEKLPKSKSAKLYADYTAFEKQ), 301 to 333 (VVLTKRRSKYEDQLKEDPADYDTWFSYITLGQE), 336 to 369 (LEADQIREIFERAVSNVPPHSKRLWRRYIFLWIK), 379 to 415 (KEVEKAREIYKTCISIIPHKKFTFAKVWLLWAKFEIR), 417 to 449 (GNLPEARKILGRGLGMSGGKPALYKGYIALEAK), 451 to 483 (REFDRCRKLYDKYVEKFAEFAAPWMEYAELEQM), 485 to 519 (GDEERARAIFELAVSQPEMEMPELVWKRFIEFEAE), 521 to 553 (ENYDRARAIYRQLLDRTHGHIKVWISFAQFEVT), 576 to 614 (EAKARARSIFGEAWDALKAANKREERVVLFESWREFEEE), and 620 to 652 (SKADLDKRKPTPVKKKRKLEDGTFEEYIDYVFP). Positions 616 to 628 (GDDKSKADLDKRK) are enriched in basic and acidic residues. A disordered region spans residues 616–636 (GDDKSKADLDKRKPTPVKKKR).

It belongs to the crooked-neck family. Associated with the spliceosome.

It localises to the nucleus. In terms of biological role, involved in pre-mRNA splicing and cell cycle progression. Required for the spliceosome assembly and initiation of the DNA replication. The protein is Pre-mRNA-splicing factor CLF1 (CLF1) of Yarrowia lipolytica (strain CLIB 122 / E 150) (Yeast).